Here is a 290-residue protein sequence, read N- to C-terminus: MKRIMLFLVTNLAVMLVLGVVLNILFSVLGINKSSISGLLVFCAVFGFGGSFISLLMSKWMAKRSYGVQVIEQPRNETEHWLVSTVARQAREAGIKMPEVGIYDSPEMNAFATGARRDDSLVAVSSGLLYSMSRDEAEAVLAHEVSHVANGDMVTLTLIQGVVNTFVMFFARIVAGVISNFFSSNNDEESSSTGGFAYMITVFVLEMLFGVLASIIVMWFSRQREFRADAGAAKLAGRDKMIAALQRLSRGAEPQLEGSMMAFGINGKRSMSELFMSHPPIEQRIAALRG.

Transmembrane regions (helical) follow at residues 6 to 26 (LFLV…NILF) and 36 to 56 (ISGL…ISLL). His-143 serves as a coordination point for Zn(2+). The active site involves Glu-144. His-147 provides a ligand contact to Zn(2+). A run of 2 helical transmembrane segments spans residues 158 to 178 (LIQG…AGVI) and 200 to 220 (ITVF…VMWF). A Zn(2+)-binding site is contributed by Glu-225.

It belongs to the peptidase M48B family. Zn(2+) is required as a cofactor.

It is found in the cell inner membrane. This is Protease HtpX from Aeromonas hydrophila subsp. hydrophila (strain ATCC 7966 / DSM 30187 / BCRC 13018 / CCUG 14551 / JCM 1027 / KCTC 2358 / NCIMB 9240 / NCTC 8049).